The sequence spans 177 residues: Large ribosomal subunit protein uL5 (177 aa).

This sequence belongs to the universal ribosomal protein uL5 family. In terms of assembly, part of the 50S ribosomal subunit; contacts the 5S rRNA and probably tRNA. Forms a bridge to the 30S subunit in the 70S ribosome.

Functionally, this is one of the proteins that bind and probably mediate the attachment of the 5S RNA into the large ribosomal subunit, where it forms part of the central protuberance. In the 70S ribosome it contacts protein S13 of the 30S subunit (bridge B1b), connecting the 2 subunits; this bridge is implicated in subunit movement. May contact the P site tRNA; the 5S rRNA and some of its associated proteins might help stabilize positioning of ribosome-bound tRNAs. This chain is Large ribosomal subunit protein uL5, found in Sulfurisphaera tokodaii (strain DSM 16993 / JCM 10545 / NBRC 100140 / 7) (Sulfolobus tokodaii).